A 348-amino-acid chain; its full sequence is Competence protein ComGA (348 aa).

145-152 (GATGSGKT) is a binding site for ATP.

The protein belongs to the GSP E family.

The protein localises to the cell membrane. Functionally, required for uptake of DNA by competent cells. The protein is Competence protein ComGA (comGA) of Halalkalibacterium halodurans (strain ATCC BAA-125 / DSM 18197 / FERM 7344 / JCM 9153 / C-125) (Bacillus halodurans).